A 109-amino-acid polypeptide reads, in one-letter code: MEKLDKRREEETYLWIPVQFLDQALIAVLKCIGLLCQPAKKTAPSPVTFNQPEEQEEDYGVALKDDDVVVLLRDNKAKSKKRDKEKPSSGRPGQTNSVPNAAIQVYKED.

The propeptide occupies 1–73 (MEKLDKRREE…KDDDVVVLLR (73 aa)). A compositionally biased stretch (basic and acidic residues) spans 74 to 88 (DNKAKSKKRDKEKPS). A disordered region spans residues 74–109 (DNKAKSKKRDKEKPSSGRPGQTNSVPNAAIQVYKED).

It belongs to the brassicaceae elicitor peptide family.

Elicitor of plant defense. This is Elicitor peptide 2 (PEP2) from Arabidopsis thaliana (Mouse-ear cress).